A 157-amino-acid polypeptide reads, in one-letter code: UPF0251 protein CLM_1546 (157 aa).

This sequence belongs to the UPF0251 family.

This Clostridium botulinum (strain Kyoto / Type A2) protein is UPF0251 protein CLM_1546.